The following is a 374-amino-acid chain: Histidine biosynthesis bifunctional protein HisB (374 aa).

Residues Met-1–Glu-183 form a histidinol-phosphatase region. Residue Asp-9 is the Nucleophile of the active site. Residues Asp-9, Asp-11, and Asp-131 each contribute to the Mg(2+) site. Catalysis depends on Asp-11, which acts as the Proton donor. The segment at Arg-184 to Leu-374 is imidazoleglycerol-phosphate dehydratase.

It in the N-terminal section; belongs to the histidinol-phosphatase family. In the C-terminal section; belongs to the imidazoleglycerol-phosphate dehydratase family. The cofactor is Mg(2+).

The protein resides in the cytoplasm. It catalyses the reaction D-erythro-1-(imidazol-4-yl)glycerol 3-phosphate = 3-(imidazol-4-yl)-2-oxopropyl phosphate + H2O. The enzyme catalyses L-histidinol phosphate + H2O = L-histidinol + phosphate. It participates in amino-acid biosynthesis; L-histidine biosynthesis; L-histidine from 5-phospho-alpha-D-ribose 1-diphosphate: step 6/9. The protein operates within amino-acid biosynthesis; L-histidine biosynthesis; L-histidine from 5-phospho-alpha-D-ribose 1-diphosphate: step 8/9. The protein is Histidine biosynthesis bifunctional protein HisB of Bacteroides fragilis (strain ATCC 25285 / DSM 2151 / CCUG 4856 / JCM 11019 / LMG 10263 / NCTC 9343 / Onslow / VPI 2553 / EN-2).